The sequence spans 400 residues: uncharacterized protein (400 aa).

Belongs to the mimivirus R640 family.

Its subcellular location is the virion. This is an uncharacterized protein from Acanthamoeba polyphaga (Amoeba).